The sequence spans 143 residues: Large ribosomal subunit protein uL11 (143 aa).

This sequence belongs to the universal ribosomal protein uL11 family. Part of the ribosomal stalk of the 50S ribosomal subunit. Interacts with L10 and the large rRNA to form the base of the stalk. L10 forms an elongated spine to which L12 dimers bind in a sequential fashion forming a multimeric L10(L12)X complex. In terms of processing, one or more lysine residues are methylated.

Forms part of the ribosomal stalk which helps the ribosome interact with GTP-bound translation factors. The sequence is that of Large ribosomal subunit protein uL11 from Paracidovorax citrulli (strain AAC00-1) (Acidovorax citrulli).